The primary structure comprises 290 residues: ATP synthase gamma chain (290 aa).

The protein belongs to the ATPase gamma chain family. F-type ATPases have 2 components, CF(1) - the catalytic core - and CF(0) - the membrane proton channel. CF(1) has five subunits: alpha(3), beta(3), gamma(1), delta(1), epsilon(1). CF(0) has three main subunits: a, b and c.

The protein localises to the cell inner membrane. Produces ATP from ADP in the presence of a proton gradient across the membrane. The gamma chain is believed to be important in regulating ATPase activity and the flow of protons through the CF(0) complex. This is ATP synthase gamma chain from Anaeromyxobacter sp. (strain K).